The sequence spans 216 residues: Cytidylate kinase (216 aa).

Residue glycine 7–threonine 15 participates in ATP binding.

This sequence belongs to the cytidylate kinase family. Type 1 subfamily.

It localises to the cytoplasm. The enzyme catalyses CMP + ATP = CDP + ADP. It carries out the reaction dCMP + ATP = dCDP + ADP. The polypeptide is Cytidylate kinase (Chlamydia trachomatis serovar D (strain ATCC VR-885 / DSM 19411 / UW-3/Cx)).